The following is a 363-amino-acid chain: Protein-arginine kinase (363 aa).

Residues 24–255 (IVLSSRIRLA…QQLIAQERAA (232 aa)) form the Phosphagen kinase C-terminal domain. ATP contacts are provided by residues 27–31 (SSRIR), His-92, Arg-126, 177–181 (RASVM), and 208–213 (RGTYGE). Residues 338–343 (RDVRRA) carry the RDXXRA motif of the pArg binding pocket involved in allosteric regulation motif.

The protein belongs to the ATP:guanido phosphotransferase family.

The enzyme catalyses L-arginyl-[protein] + ATP = N(omega)-phospho-L-arginyl-[protein] + ADP + H(+). With respect to regulation, appears to be allosterically activated by the binding of pArg-containing polypeptides to the pArg-binding pocket localized in the C-terminal domain of McsB. Functionally, catalyzes the specific phosphorylation of arginine residues in a large number of proteins. Is part of the bacterial stress response system. Protein arginine phosphorylation has a physiologically important role and is involved in the regulation of many critical cellular processes, such as protein homeostasis, motility, competence, and stringent and stress responses, by regulating gene expression and protein activity. The sequence is that of Protein-arginine kinase from Geobacillus kaustophilus (strain HTA426).